A 137-amino-acid chain; its full sequence is Fluoride-specific ion channel FluC 1 (137 aa).

The next 4 helical transmembrane spans lie at 4 to 24 (LIYI…YYLG), 37 to 57 (LATL…TTYI), 67 to 87 (VITG…TLSV), and 98 to 118 (WGIA…MSGL). Positions 77 and 80 each coordinate Na(+).

It belongs to the fluoride channel Fluc/FEX (TC 1.A.43) family.

The protein resides in the cell membrane. The enzyme catalyses fluoride(in) = fluoride(out). With respect to regulation, na(+) is not transported, but it plays an essential structural role and its presence is essential for fluoride channel function. Fluoride-specific ion channel. Important for reducing fluoride concentration in the cell, thus reducing its toxicity. The chain is Fluoride-specific ion channel FluC 1 from Bacillus anthracis.